The following is a 277-amino-acid chain: MKRLYGVIGNPIGHSLSPVMHNDAFEHLKMDAHYHAFLVKEEVLGEAVRGLKALGISGFNVTTPHKVAIMDYLDEIDPLAKQIGAVNTVVHKDGKLIGYNTDGIGFVRALQSISSEPLQEKRILLLGAGGASRAIYFSLADAGVKEIDVANRTVDKAKELIAACTATVHSVALSLEKATKEQGNYDIIIQTTTIGMHPRVEHTPLQISSLKKGTIVSDIIYNPFETKILCEAKEQGAIIQNGIDMFVYQGALAFEMWTGCVPNIERMKQLVIRKLGG.

Residues 15–17 (SLS) and threonine 62 each bind shikimate. The active-site Proton acceptor is lysine 66. 2 residues coordinate shikimate: asparagine 87 and aspartate 102. NADP(+) is bound by residues 127-131 (GAGGA), 151-156 (NRTVDK), and isoleucine 219. Position 221 (tyrosine 221) interacts with shikimate. Residue glycine 242 coordinates NADP(+).

This sequence belongs to the shikimate dehydrogenase family. In terms of assembly, homodimer.

It catalyses the reaction shikimate + NADP(+) = 3-dehydroshikimate + NADPH + H(+). It participates in metabolic intermediate biosynthesis; chorismate biosynthesis; chorismate from D-erythrose 4-phosphate and phosphoenolpyruvate: step 4/7. Involved in the biosynthesis of the chorismate, which leads to the biosynthesis of aromatic amino acids. Catalyzes the reversible NADPH linked reduction of 3-dehydroshikimate (DHSA) to yield shikimate (SA). In Bacillus anthracis (strain CDC 684 / NRRL 3495), this protein is Shikimate dehydrogenase (NADP(+)).